A 463-amino-acid polypeptide reads, in one-letter code: Trigger factor (463 aa).

The 82-residue stretch at 162 to 243 folds into the PPIase FKBP-type domain; it reads GDVVTLDLEA…VSQVAARELP (82 aa). The segment at 427-463 is disordered; it reads TNGEIVDLDDEDETESTPETTEAAEAAEESTEDKPEA. A compositionally biased stretch (acidic residues) spans 432–442; the sequence is VDLDDEDETES.

The protein belongs to the FKBP-type PPIase family. Tig subfamily.

Its subcellular location is the cytoplasm. The catalysed reaction is [protein]-peptidylproline (omega=180) = [protein]-peptidylproline (omega=0). In terms of biological role, involved in protein export. Acts as a chaperone by maintaining the newly synthesized protein in an open conformation. Functions as a peptidyl-prolyl cis-trans isomerase. The sequence is that of Trigger factor from Streptomyces avermitilis (strain ATCC 31267 / DSM 46492 / JCM 5070 / NBRC 14893 / NCIMB 12804 / NRRL 8165 / MA-4680).